The chain runs to 75 residues: Small ribosomal subunit protein bS16 (75 aa).

It belongs to the bacterial ribosomal protein bS16 family.

The protein is Small ribosomal subunit protein bS16 of Campylobacter fetus subsp. fetus (strain 82-40).